A 423-amino-acid chain; its full sequence is Sulfate adenylyltransferase (423 aa).

Residues Gln207 and Arg209 each contribute to the sulfate site. ATP-binding positions include 207 to 210 (QLRN) and 301 to 304 (GRDH). Catalysis depends on residues Arg209 and Asn210. Residue Ala305 coordinates sulfate.

This sequence belongs to the sulfate adenylyltransferase family.

It localises to the mitosome. The enzyme catalyses sulfate + ATP + H(+) = adenosine 5'-phosphosulfate + diphosphate. Its pathway is sulfur metabolism; hydrogen sulfide biosynthesis; sulfite from sulfate: step 1/3. Catalyzes the first intracellular reaction of sulfate assimilation, forming adenosine-5'-phosphosulfate (APS) from inorganic sulfate and ATP. The polypeptide is Sulfate adenylyltransferase (Entamoeba histolytica (strain ATCC 30459 / HM-1:IMSS / ABRM)).